Consider the following 643-residue polypeptide: Pescadillo homolog (643 aa).

Over residues 305–323 the composition is skewed to basic and acidic residues; the sequence is EKTKEKNHKSDNNPHEHTT. The tract at residues 305–329 is disordered; that stretch reads EKTKEKNHKSDNNPHEHTTNIDNNN. The BRCT domain occupies 378–474; sequence KLKELFKNHI…NILPCSDYLT (97 aa). Residues 531 to 615 are a coiled coil; that stretch reads NYKEEEEEEN…IVLSKKKRKL (85 aa).

This sequence belongs to the pescadillo family. Interacts with dual specificity protein phosphatase YVH1.

Its subcellular location is the nucleus. It is found in the nucleolus. The protein resides in the nucleoplasm. In terms of biological role, required for maturation of ribosomal RNAs and formation of the large ribosomal subunit. This Plasmodium falciparum (isolate 3D7) protein is Pescadillo homolog.